Reading from the N-terminus, the 359-residue chain is Peptide chain release factor 1 (359 aa).

N5-methylglutamine is present on Gln235. Residues 282–306 form a disordered region; that stretch reads RQRADSERSADRKSQVGSGDRSERI.

It belongs to the prokaryotic/mitochondrial release factor family. Methylated by PrmC. Methylation increases the termination efficiency of RF1.

It is found in the cytoplasm. Functionally, peptide chain release factor 1 directs the termination of translation in response to the peptide chain termination codons UAG and UAA. This chain is Peptide chain release factor 1, found in Rhizobium rhizogenes (strain K84 / ATCC BAA-868) (Agrobacterium radiobacter).